Reading from the N-terminus, the 395-residue chain is FAD-dependent monooxygenase cctM (395 aa).

An N-terminal signal peptide occupies residues 1–23 (MEPGTDVRRVLVIGAGAAGLLIA). 3 residues coordinate FAD: Glu-37, Gly-52, and Arg-112. 2 N-linked (GlcNAc...) asparagine glycosylation sites follow: Asn-138 and Asn-298. Position 306 (Asp-306) interacts with FAD.

Belongs to the paxM FAD-dependent monooxygenase family. FAD serves as cofactor.

The protein operates within mycotoxin biosynthesis. Functionally, FAD-dependent monooxygenase; part of the gene cluster that mediates the biosynthesis of the mycotoxin cyclochlorotine, a hepatotoxic and carcinogenic cyclic chlorinated pentapeptide. The function of cctM within the pathway, if any, remains undetermined. The NRPS cctN initially catalyzes the condensation of L-serine (Ser), Pro, L-2-aminobutyrate (2Abu), Ser, and beta-Phe in this order to produce isocyclotine. After the dichlorination of Pro2 catalyzed by cctP2 to produce isocyclochlorotine, the cctO-mediated transacylation of isocyclochlorotine can furnish cyclochlorotine. The subsequent hydroxylation of cyclochlorotine by cctR yields hydroxycyclochlorotine as the final product. CctP1 probably acts as a phenylalanine aminomutase and provides the uncommon building block beta-Phe. Furthermore, 2Abu can be synthesized from threonine by one of the threonine dehydratases and transaminases localized outside of the cluster. The functions of the remaining proteins encoded by the cluster, cctM and cctT, have not been identified yet. This Talaromyces islandicus (Penicillium islandicum) protein is FAD-dependent monooxygenase cctM.